The primary structure comprises 750 residues: MFRSTATVAAATAMGLLTATGHGSLAIAQGTTGSNAVVVDGTNFALNGASMSYVFHANSTTGDLVSDHFGATISGAIPAPKEPAVNGWVGMPGRIRREFPDQGRGDFRIPAVRIRQTAGYTVSDLQYQGHEVVDGKPALPGLPATFGEAGDVTTLVVHLYDNYSAVAADLSYSVFPEFDAVVRSVNVTNKGKGNITIENLASLSVDFPLEDLDLVSLRGDWAREANRERRRVEYGIQGFGSSTGYSSHLHNPFFALVHPSTTESQGEAWGFNLVYTGSFSAQVEKGSQGLTRALIGFNPDQLSWNLGPGETLTSPECVSVYSKDGIGGMSRKFHRLYRKHLIRSKFATSDRPPLLNSWEGVYFDFNQSSIETLAEQSAALGIRLFVMDDGWFGDKYPRTSDNAGLGDWTPNPDRFPNGLEPVVEEITNLTVNDTSAEKLRFGIWVEPEMVNPNSSLYREHPDWALHAGAYARTERRNQLVLNLALPEVQEYIIDFMTDLLNSADISYIKWDNNRGIHEAPSPSTDHEYMLGVYRVFDTLTARFPDVLWEGCASGGGRFDAGVLHYFPQIWTSDNTDGVDRVTIQFGTSLAYPPSAMGAHLSAVPNHQTGRTVPLEFRAHVAMMGGSFGLELDPATLQDDPDVPELIQMAEKVNPLVLNGDLYRLRLPEESQWPAALFVAEDGSQAVLFYFQLSPNVNHAAPWVRLQGLDPEASYTVDGDKTYTGATLMNLGLQYTFDTEYGSKVVFLERQ.

The first 26 residues, 1-26 (MFRSTATVAAATAMGLLTATGHGSLA), serve as a signal peptide directing secretion. Asn58, Asn162, Asn186, Asn194, Asn366, Asn428, Asn432, and Asn453 each carry an N-linked (GlcNAc...) asparagine glycan. Asp511 functions as the Nucleophile in the catalytic mechanism. Asp573 (proton donor) is an active-site residue.

The protein belongs to the glycosyl hydrolase 36 family. As to quaternary structure, homotetramer. It depends on Mg(2+) as a cofactor. The cofactor is NAD(+).

The protein localises to the secreted. It catalyses the reaction Hydrolysis of terminal, non-reducing alpha-D-galactose residues in alpha-D-galactosides, including galactose oligosaccharides, galactomannans and galactolipids.. Functionally, hydrolyzes a variety of simple alpha-D-galactoside as well as more complex molecules such as oligosaccharides and polysaccharides. Active on paranitrophenyl-alpha-galactoside, raffinose, locust bean gum and gum guar. The chain is Alpha-galactosidase C (aglC) from Emericella nidulans (strain FGSC A4 / ATCC 38163 / CBS 112.46 / NRRL 194 / M139) (Aspergillus nidulans).